A 348-amino-acid polypeptide reads, in one-letter code: E3 ubiquitin-protein ligase MARCHF9 (348 aa).

The tract at residues 48–96 (ARDGDGDEEEYYGSEPRARGLAGDKEPRAGPPPPPAPPPPPPGALDALS) is disordered. Residues 63–75 (PRARGLAGDKEPR) are compositionally biased toward basic and acidic residues. The segment covering 76-90 (AGPPPPPAPPPPPPG) has biased composition (pro residues). The segment at 102 to 162 (DSGLRTPQCR…ELCYFKYQVL (61 aa)) adopts an RING-CH-type zinc-finger fold. Zn(2+) contacts are provided by C110, C113, C126, C128, H136, C139, C152, and C155. Transmembrane regions (helical) follow at residues 185-205 (IAAI…LIWS) and 219-239 (LFQI…GLIV). 2 disordered regions span residues 272-304 (GDTG…AAQR) and 328-348 (PPDA…VTTV).

As to quaternary structure, homodimer.

The protein localises to the golgi apparatus membrane. It is found in the lysosome membrane. It carries out the reaction S-ubiquitinyl-[E2 ubiquitin-conjugating enzyme]-L-cysteine + [acceptor protein]-L-lysine = [E2 ubiquitin-conjugating enzyme]-L-cysteine + N(6)-ubiquitinyl-[acceptor protein]-L-lysine.. It functions in the pathway protein modification; protein ubiquitination. Functionally, E3 ubiquitin-protein ligase that may mediate ubiquitination of MHC-I, CD4 and ICAM1, and promote their subsequent endocytosis and sorting to lysosomes via multivesicular bodies. E3 ubiquitin ligases accept ubiquitin from an E2 ubiquitin-conjugating enzyme in the form of a thioester and then directly transfer the ubiquitin to targeted substrates. This is E3 ubiquitin-protein ligase MARCHF9 (Marchf9) from Mus musculus (Mouse).